A 295-amino-acid polypeptide reads, in one-letter code: Bifunctional protein FolD (295 aa).

NADP(+) is bound by residues 166-168 (GRS), serine 191, and isoleucine 232.

It belongs to the tetrahydrofolate dehydrogenase/cyclohydrolase family. As to quaternary structure, homodimer.

It carries out the reaction (6R)-5,10-methylene-5,6,7,8-tetrahydrofolate + NADP(+) = (6R)-5,10-methenyltetrahydrofolate + NADPH. The enzyme catalyses (6R)-5,10-methenyltetrahydrofolate + H2O = (6R)-10-formyltetrahydrofolate + H(+). Its pathway is one-carbon metabolism; tetrahydrofolate interconversion. Its function is as follows. Catalyzes the oxidation of 5,10-methylenetetrahydrofolate to 5,10-methenyltetrahydrofolate and then the hydrolysis of 5,10-methenyltetrahydrofolate to 10-formyltetrahydrofolate. The protein is Bifunctional protein FolD of Rhodopseudomonas palustris (strain BisA53).